A 196-amino-acid chain; its full sequence is Carnitine operon protein CaiE (196 aa).

Residues 177-196 (RQMEENRPRLQGTTDVMPKR) form a disordered region.

It belongs to the transferase hexapeptide repeat family.

Its pathway is amine and polyamine metabolism; carnitine metabolism. Overproduction of CaiE stimulates the activity of CaiB and CaiD. This chain is Carnitine operon protein CaiE, found in Escherichia coli O17:K52:H18 (strain UMN026 / ExPEC).